A 368-amino-acid chain; its full sequence is Probable acetylxylan esterase A (368 aa).

The first 19 residues, M1–A19, serve as a signal peptide directing secretion. Positions S20–R28 are excised as a propeptide. A catalytic region spans residues G32 to F304. The active-site Charge relay system is the S149. Residue N191 is glycosylated (N-linked (GlcNAc...) asparagine). A ser/Thr-rich linker region spans residues A305–V333. Residues G306–G330 are disordered. Over residues G307–G330 the composition is skewed to low complexity. The CBM1 domain maps to G332–L368.

Belongs to the carbohydrate esterase 1 (CE1) family. AxeA subfamily. In terms of assembly, monomer.

The protein localises to the secreted. The catalysed reaction is Deacetylation of xylans and xylo-oligosaccharides.. It functions in the pathway glycan degradation; xylan degradation. Acetylxylan esterase involved in the hydrolysis of xylan, a major structural heterogeneous polysaccharide found in plant biomass representing the second most abundant polysaccharide in the biosphere, after cellulose. Degrades acetylated xylans by cleaving acetyl side groups from the hetero-xylan backbone. This is Probable acetylxylan esterase A (axeA) from Neosartorya fischeri (strain ATCC 1020 / DSM 3700 / CBS 544.65 / FGSC A1164 / JCM 1740 / NRRL 181 / WB 181) (Aspergillus fischerianus).